A 543-amino-acid polypeptide reads, in one-letter code: CTP synthase (543 aa).

The interval 1–265 (MTRYIFVTGG…DDFVVERFGL (265 aa)) is amidoligase domain. S13 provides a ligand contact to CTP. A UTP-binding site is contributed by S13. Residues 14–19 (SLGKGI) and D71 contribute to the ATP site. D71 and E139 together coordinate Mg(2+). CTP-binding positions include 146 to 148 (DIE), 186 to 191 (KTKPTQ), and K222. UTP-binding positions include 186–191 (KTKPTQ) and K222. The Glutamine amidotransferase type-1 domain occupies 290 to 541 (TIAMVGKYME…VKAALAQHQK (252 aa)). G351 contacts L-glutamine. The Nucleophile; for glutamine hydrolysis role is filled by C378. L-glutamine contacts are provided by residues 379-382 (LGMQ), E402, and R469. Catalysis depends on residues H514 and E516.

The protein belongs to the CTP synthase family. Homotetramer.

It carries out the reaction UTP + L-glutamine + ATP + H2O = CTP + L-glutamate + ADP + phosphate + 2 H(+). The enzyme catalyses L-glutamine + H2O = L-glutamate + NH4(+). It catalyses the reaction UTP + NH4(+) + ATP = CTP + ADP + phosphate + 2 H(+). The protein operates within pyrimidine metabolism; CTP biosynthesis via de novo pathway; CTP from UDP: step 2/2. Its activity is regulated as follows. Allosterically activated by GTP, when glutamine is the substrate; GTP has no effect on the reaction when ammonia is the substrate. The allosteric effector GTP functions by stabilizing the protein conformation that binds the tetrahedral intermediate(s) formed during glutamine hydrolysis. Inhibited by the product CTP, via allosteric rather than competitive inhibition. Its function is as follows. Catalyzes the ATP-dependent amination of UTP to CTP with either L-glutamine or ammonia as the source of nitrogen. Regulates intracellular CTP levels through interactions with the four ribonucleotide triphosphates. The protein is CTP synthase of Pseudomonas savastanoi pv. phaseolicola (strain 1448A / Race 6) (Pseudomonas syringae pv. phaseolicola (strain 1448A / Race 6)).